Reading from the N-terminus, the 330-residue chain is Protein pelota homolog (330 aa).

This sequence belongs to the eukaryotic release factor 1 family. Pelota subfamily. Monomer. A divalent metal cation is required as a cofactor.

It localises to the cytoplasm. In terms of biological role, may function in recognizing stalled ribosomes, interact with stem-loop structures in stalled mRNA molecules, and effect endonucleolytic cleavage of the mRNA. May play a role in the release non-functional ribosomes and degradation of damaged mRNAs. Has endoribonuclease activity. This chain is Protein pelota homolog, found in Pyrobaculum neutrophilum (strain DSM 2338 / JCM 9278 / NBRC 100436 / V24Sta) (Thermoproteus neutrophilus).